A 367-amino-acid polypeptide reads, in one-letter code: Aflatoxin B1 aldehyde reductase member 2 (367 aa).

The transit peptide at 1-46 directs the protein to the mitochondrion; it reads MLRAVSRAVSRAAVRCAWRSGPSVARPLAMSRSPAPRAVSGAPLRP. Positions 27–46 are disordered; sequence PLAMSRSPAPRAVSGAPLRP. Phosphoserine is present on S40. Phosphothreonine is present on T48. D80 serves as a coordination point for NADP(+). Y85 functions as the Proton donor in the catalytic mechanism. K136 is modified (N6-acetyllysine). H149 lines the substrate pocket. NADP(+) is bound by residues 179-180, Q205, 234-244, and R258; these read SN and NPLAGGLLTGK. N6-succinyllysine is present on K244. S263 carries the post-translational modification Phosphoserine. Positions 268 and 271 each coordinate substrate. Residue 326 to 334 coordinates NADP(+); the sequence is SSLEQLEQN. R367 contacts substrate.

This sequence belongs to the aldo/keto reductase family. Aldo/keto reductase 2 subfamily. In terms of assembly, homodimer. Heterodimer with AKR7A1.

The protein resides in the mitochondrion. The protein localises to the golgi apparatus. It localises to the golgi stack. Its subcellular location is the cytoplasm. The enzyme catalyses 4-hydroxybutanoate + NADP(+) = succinate semialdehyde + NADPH + H(+). Functionally, catalyzes the NADPH-dependent reduction of succinic semialdehyde to gamma-hydroxybutyrate. May have an important role in producing the neuromodulator gamma-hydroxybutyrate (GHB). Has broad substrate specificity. Can reduce the dialdehyde protein-binding form of aflatoxin B1 (AFB1) to the non-binding AFB1 dialcohol. Acts as a 2-carboxybenzaldehyde reductase. This Rattus norvegicus (Rat) protein is Aflatoxin B1 aldehyde reductase member 2 (Akr7a2).